Here is a 181-residue protein sequence, read N- to C-terminus: Adenine phosphoribosyltransferase (181 aa).

It belongs to the purine/pyrimidine phosphoribosyltransferase family. In terms of assembly, homodimer.

The protein resides in the cytoplasm. The catalysed reaction is AMP + diphosphate = 5-phospho-alpha-D-ribose 1-diphosphate + adenine. Its pathway is purine metabolism; AMP biosynthesis via salvage pathway; AMP from adenine: step 1/1. In terms of biological role, catalyzes a salvage reaction resulting in the formation of AMP, that is energically less costly than de novo synthesis. This Shewanella amazonensis (strain ATCC BAA-1098 / SB2B) protein is Adenine phosphoribosyltransferase.